Consider the following 734-residue polypeptide: MALRFPRFSQGLAQDPTTRRIWFGIATAHDFESHDDITEERLYQNIFASHFGQLAIIFLWTSGNLFHVAWQGNFESWVQDPLHVRPIAHAIWDPHFGQPAVEAFTRGGAPGPVNIAYSGVYQWWYTIGLRTNEDLYTGALFLLFLSAISLIAGWLHLQPKWKPSVSWFKNAESRLNHHLSGLFGVSSLAWTGHLVHVAIPGSRGEYVRWNNFLDVLPHPQGLGPLFTGQWNLYAQNPDSSSHLFGTSQGAGTAILTLLGGFHPQTQSLWLTDIAHHHLAIAFIFLVAGHMYRTNFGIGHSMKDLLEAHIPPGGRLGRGHKGLYDTINNSIHFQLGLALASLGVITSLVAQHMYSLPAYAFIAQDFTTQAALYTHHQYIAGFIMTGAFAHGAIFFIRDYNPEQNEDNVLARMLDHKEAIISHLSWASLFLGFHTLGLYVHNDVMLAFGTPEKQILIEPIFAQWIQSAHGKTSYGFDVLLSSTTGPAFNAGRSIWLPGWLNAVNENSNSLFLTIGPGDFLVHHAIALGLHTTTLILVKGALDARGSKLMPDKKDFGYSFPCDGPGRGGTCDISAWDAFYLAVFWMLNTIGWVTFYWHWKHITLWQGNVSQFNESSTYLMGWLRDYLWLNSSQLINGYNPFGMNSLSVWAWMFLFGHLVWATGFMFLISWRGYWQELIETLAWAHERTPLANLIRWRDKPVALSIVQARLVGLAHFSVGYIFTYAAFLIASTSGKFG.

A run of 8 helical transmembrane segments spans residues 46–69, 135–158, 175–199, 273–291, 330–353, 369–395, 417–439, and 517–535; these read IFAS…FHVA, LYTG…LHLQ, LNHH…HVAI, IAHH…GHMY, IHFQ…QHMY, AALY…IFFI, AIIS…LYVH, and FLVH…LILV. [4Fe-4S] cluster is bound by residues Cys559 and Cys568. 2 helical membrane passes run 575–596 and 643–665; these read AFYL…YWHW and LSVW…MFLI. 3 residues coordinate chlorophyll a: His654, Met662, and Tyr670. Trp671 contributes to the phylloquinone binding site. A helical membrane pass occupies residues 707 to 727; sequence LVGLAHFSVGYIFTYAAFLIA.

Belongs to the PsaA/PsaB family. In terms of assembly, the PsaA/B heterodimer binds the P700 chlorophyll special pair and subsequent electron acceptors. PSI consists of a core antenna complex that captures photons, and an electron transfer chain that converts photonic excitation into a charge separation. The eukaryotic PSI reaction center is composed of at least 11 subunits. Requires P700 is a chlorophyll a/chlorophyll a' dimer, A0 is one or more chlorophyll a, A1 is one or both phylloquinones and FX is a shared 4Fe-4S iron-sulfur center. as cofactor.

It localises to the plastid. Its subcellular location is the chloroplast thylakoid membrane. It carries out the reaction reduced [plastocyanin] + hnu + oxidized [2Fe-2S]-[ferredoxin] = oxidized [plastocyanin] + reduced [2Fe-2S]-[ferredoxin]. Its function is as follows. PsaA and PsaB bind P700, the primary electron donor of photosystem I (PSI), as well as the electron acceptors A0, A1 and FX. PSI is a plastocyanin-ferredoxin oxidoreductase, converting photonic excitation into a charge separation, which transfers an electron from the donor P700 chlorophyll pair to the spectroscopically characterized acceptors A0, A1, FX, FA and FB in turn. Oxidized P700 is reduced on the lumenal side of the thylakoid membrane by plastocyanin. The protein is Photosystem I P700 chlorophyll a apoprotein A2 of Vitis vinifera (Grape).